A 328-amino-acid polypeptide reads, in one-letter code: Probable G-protein coupled receptor 82 (328 aa).

The Extracellular portion of the chain corresponds to Met1–Ser11. 2 N-linked (GlcNAc...) asparagine glycosylation sites follow: Asn3 and Asn4. Residues Val12–Gly32 form a helical membrane-spanning segment. The Cytoplasmic portion of the chain corresponds to Asn33–Ala55. Residues Asn56 to Leu76 form a helical membrane-spanning segment. Over Arg77–Asn92 the chain is Extracellular. Residues Phe93 to Ile115 form a helical membrane-spanning segment. Residues Ser116 to Cys156 lie on the Cytoplasmic side of the membrane. The helical transmembrane segment at Ile157–Val177 threads the bilayer. Over Glu178 to Arg197 the chain is Extracellular. A helical transmembrane segment spans residues Pro198–Val218. Residues Thr219 to Leu251 are Cytoplasmic-facing. The chain crosses the membrane as a helical span at residues Leu252–Phe272. Residues Tyr273–Ser328 are Extracellular-facing.

This sequence belongs to the G-protein coupled receptor 1 family.

It is found in the cell membrane. In terms of biological role, orphan receptor. This is Probable G-protein coupled receptor 82 (Gpr82) from Mus musculus (Mouse).